Reading from the N-terminus, the 478-residue chain is MELGVPLPRRPVPGSYGVPFVSAVRDRLDFYYLQGQDKYFESRAERYGSTVVRINVPPGPFMARDPRVVALLDAKSFPVLFDVAKVEKRDVFTGTFMPSTSLTGGYRVCAYLDPSEPNHAKIKQLLLSLLVSRKDAFVPVFRSNFGALLDTVESQLASGGGKSDFTALNDATSFEFIGEAYFGVRPSASSSLGTGGPTKAALWLLWQLAPLTTLGLPMIIEDPLLHTLPLPPFLISSDYKALYAYFAAAASQALDAAEGLGLSREEACHNLLFATVFNSYGGFKLLLPQILSRVAQAGEKLHERLAAEIRSAVADAGGNVTLAALEKMELTRSVVWEALRLDPPVRFQYGRAKADLEIESHDASFAIKKGEMLFGYQPCATRDPRVFGATAREFVGDRFVGEEGRKLLQYVYWSNGRETENPSVDNKQCPGKNLVVLVGRLLLVELFLRYDTFTAEAGKKVVITGVTKASTSAVNRTA.

Heme b is bound by residues Lys-88, His-119, and Lys-123. Position 278 (Asn-278) interacts with (13S)-hydroperoxy-(9Z,11E,15Z)-octadecatrienoate. The heme b site is built by Lys-427 and Cys-429.

It belongs to the cytochrome P450 family. Heme b serves as cofactor. As to expression, weakly expressed in roots, shoots, leaves and flowers.

It carries out the reaction (13S)-hydroperoxy-(9Z,11E,15Z)-octadecatrienoate = (9Z,13S,15Z)-12,13-epoxyoctadeca-9,11,15-trienoate + H2O. Its pathway is lipid metabolism; oxylipin biosynthesis. In terms of biological role, involved in the biosynthesis of jasmonic acid, a growth regulator that is implicated also as a signaling molecule in plant defense. Converts 13-hydroperoxylinolenic acid to 12,13-epoxylinolenic acid. The polypeptide is Allene oxide synthase 2 (CYP74A2) (Oryza sativa subsp. japonica (Rice)).